The primary structure comprises 1097 residues: FHIP family protein GK23746 (1097 aa).

Residues 1–21 (MSWLRSSPLRQSLTRTTSSGN) show a composition bias toward polar residues. The disordered stretch occupies residues 1 to 25 (MSWLRSSPLRQSLTRTTSSGNGIRP). At Ser491 the chain carries Phosphoserine. Disordered regions lie at residues 639-684 (DVSA…SGRR), 820-856 (NENSPLHQQQSLQHPHHLQPLPAPQQTGAGAQQRSAY), and 932-1042 (NNQQ…SEPV). The segment covering 641-654 (SASSGNGTGSVVVG) has biased composition (low complexity). Residue Ser823 is modified to Phosphoserine. Low complexity-rich tracts occupy residues 824–852 (PLHQQQSLQHPHHLQPLPAPQQTGAGAQQ) and 932–948 (NNQQSSNQTHLNSSSSS). The segment covering 949 to 962 (AVTTCETSLSTQPH) has biased composition (polar residues). A compositionally biased stretch (low complexity) spans 973 to 985 (TTSSTISTSSGTT). The span at 986–995 (AGSGGGGGSG) shows a compositional bias: gly residues. Composition is skewed to low complexity over residues 996–1006 (SNSSFSIGGST) and 1013–1022 (SNNTTNSSST).

The protein belongs to the FHIP family.

The chain is FHIP family protein GK23746 from Drosophila willistoni (Fruit fly).